Here is a 731-residue protein sequence, read N- to C-terminus: MSRSEKLTGEHLAPEPAEMARLVAGTHHNPHGILGAHEYDDHTVIRAFRPHAVEVVALVGKDRFSLQHLDSGLFAVALPFVDLIDYRLQVTYEGCEPHTVADAYRFLPTLGEVDLHLFAEGRHERLWEVLGAHPRSFTTADGVVSGVSFAVWAPNAKGVSLIGEFNGWNGHEAPMRVLGPSGVWELFWPDFPCDGLYKFRVHGADGVVTDRADAFAFGTEVPQQTASRVTSSDYTWGDDDWMAGRALRNPVNEAMSTYEVHLGSWRPGLSYRQLARELTDYIVDQGFTHVELLPVAEHPFAGSWGYQVTSYYAPTSRFGTPDDFRALVDALHQAGIGVIVDWVPAHFPKDAWALGRFDGTPLYEHSDPKRGEQLDWGTYVFDFGRPEVRNFLVANALYWLQEFHIDGLRVDAVASMLYLDYSRPEGGWTPNVHGGRENLEAVQFLQEMNATAHKVAPGIVTIAEESTPWSGVTRPTNIGGLGFSMKWNMGWMHDTLDYVSRDPVYRSYHHHEMTFSMLYAFSENYVLPLSHDEVVHGKGTLWGRMPGNNHVKAAGLRSLLAYQWAHPGKQLLFMGQEFGQRAEWSEQRGLDWFQLDENGFSNGIQRLVRDINDIYRCHPALWSLDTTPEGYSWIDANDSANNVLSFMRYGSDGSVLACVFNFAGAEHRDYRLGLPRAGRWREVLNTDATIYHGSGIGNLGGVDATDDPWHGRPASAVLVLPPTSALWLTPA.

A disulfide bridge links Cys-193 with Cys-617. The active-site Nucleophile is the Asp-411. The active-site Proton donor is the Glu-464.

It belongs to the glycosyl hydrolase 13 family. GlgB subfamily. As to quaternary structure, monomer.

It catalyses the reaction Transfers a segment of a (1-&gt;4)-alpha-D-glucan chain to a primary hydroxy group in a similar glucan chain.. The protein operates within glycan biosynthesis; glycogen biosynthesis. It participates in capsule biogenesis; capsule polysaccharide biosynthesis. Its function is as follows. Essential enzyme that catalyzes the formation of the alpha-1,6-glucosidic linkages in glucan chains by scission of a 1,4-alpha-linked oligosaccharide from growing alpha-1,4-glucan chains and the subsequent attachment of the oligosaccharide to the alpha-1,6 position. Is involved in the biosynthesis of both glycogen and capsular alpha-D-glucan. This chain is 1,4-alpha-glucan branching enzyme GlgB (glgB), found in Mycobacterium tuberculosis (strain CDC 1551 / Oshkosh).